The chain runs to 488 residues: Transmembrane protein 39A-B (488 aa).

Residues Asn-31 and Asn-39 are each glycosylated (N-linked (GlcNAc...) asparagine). 3 consecutive transmembrane segments (helical) span residues 72–92, 110–130, and 155–175; these read GLVF…TQYI, TSLN…VMLA, and LIIG…WTTV. N-linked (GlcNAc...) asparagine glycosylation occurs at Asn-180. A helical membrane pass occupies residues 182 to 202; that stretch reads SVLNLLFLGYPFGVYVPLCCF. N-linked (GlcNAc...) asparagine glycosylation is present at Asn-206. 4 helical membrane passes run 287-307, 319-339, 420-440, and 446-466; these read EVLF…LCFV, CEHL…QLLP, LLNL…YSLL, and NHTL…FKLL.

The protein belongs to the TMEM39 family.

The protein localises to the membrane. In Xenopus laevis (African clawed frog), this protein is Transmembrane protein 39A-B (tmem39a-b).